The following is a 407-amino-acid chain: O-methyltransferase verK (407 aa).

S-adenosyl-L-methionine contacts are provided by residues glutamate 263 and 295–297; that span reads GDF. Histidine 314 (proton acceptor) is an active-site residue.

The protein belongs to the class I-like SAM-binding methyltransferase superfamily. Cation-independent O-methyltransferase family.

Its pathway is mycotoxin biosynthesis. Its function is as follows. O-methyltransferase; part of the gene cluster that mediates the biosynthesis of 11'-deoxyverticillin A, one of the dimeric epipolythiodioxopiperazines (ETPs) from the verticillin family that act as mycotoxins. 11'-deoxyverticillin A is required for normal conidiation. The nonribosomal peptide synthetase verP is speculated to be responsible for condensation of amino acids to form the carbon skeleton of verticillin, whereas the cluster-specific tailoring enzymes are involved in further modifications leading to the production of 11'-deoxyverticillin A. This chain is O-methyltransferase verK, found in Clonostachys rogersoniana.